We begin with the raw amino-acid sequence, 383 residues long: uncharacterized protein (383 aa).

The next 2 helical transmembrane spans lie at 49–69 (VDLL…GCVA) and 347–367 (LLGG…PVAG).

To M.tuberculosis Rv0874c.

Its subcellular location is the cell membrane. This is an uncharacterized protein from Mycobacterium tuberculosis (strain CDC 1551 / Oshkosh).